The following is a 251-amino-acid chain: MRKPIIAGNWKMNKTLAEAVSFVEEVKGQIPAASAVDAVVCSPALFLERLVAKAEGTDLQVGAQNMHFEKNGAFTGEISPVALSDLKVGYVVLGHSERREMFAETDESVNKKTLAAFEHGLTPIVCCGETLEERESGKTFDLVAGQVTKALAGLTEEQVKVTVIAYEPIWAIGTGKSSSSADANEVCAHIRKVVAEAVSPEAAEAVRIQYGGSVKPENIKEYMAQSDIDGALVGGASLEPASFLGLLGAVK.

9–11 (NWK) is a binding site for substrate. The Electrophile role is filled by histidine 95. The active-site Proton acceptor is the glutamate 167. Residues glycine 173, serine 213, and 234–235 (GG) each bind substrate. Position 213 is a phosphoserine (serine 213).

It belongs to the triosephosphate isomerase family. In terms of assembly, homodimer.

The protein resides in the cytoplasm. It catalyses the reaction D-glyceraldehyde 3-phosphate = dihydroxyacetone phosphate. The protein operates within carbohydrate biosynthesis; gluconeogenesis. Its pathway is carbohydrate degradation; glycolysis; D-glyceraldehyde 3-phosphate from glycerone phosphate: step 1/1. Functionally, involved in the gluconeogenesis. Catalyzes stereospecifically the conversion of dihydroxyacetone phosphate (DHAP) to D-glyceraldehyde-3-phosphate (G3P). The polypeptide is Triosephosphate isomerase (Bacillus mycoides (strain KBAB4) (Bacillus weihenstephanensis)).